The primary structure comprises 694 residues: Elongation factor G (694 aa).

The 275-residue stretch at 11-285 (KDYRNIGIMA…AVIDYLPSPL (275 aa)) folds into the tr-type G domain. GTP contacts are provided by residues 20 to 27 (AHIDAGKT), 84 to 88 (DTPGH), and 138 to 141 (NKMD).

The protein belongs to the TRAFAC class translation factor GTPase superfamily. Classic translation factor GTPase family. EF-G/EF-2 subfamily.

It localises to the cytoplasm. Its function is as follows. Catalyzes the GTP-dependent ribosomal translocation step during translation elongation. During this step, the ribosome changes from the pre-translocational (PRE) to the post-translocational (POST) state as the newly formed A-site-bound peptidyl-tRNA and P-site-bound deacylated tRNA move to the P and E sites, respectively. Catalyzes the coordinated movement of the two tRNA molecules, the mRNA and conformational changes in the ribosome. The sequence is that of Elongation factor G from Mycoplasma mobile (strain ATCC 43663 / 163K / NCTC 11711) (Mesomycoplasma mobile).